Consider the following 307-residue polypeptide: N-acetylmuramic acid 6-phosphate etherase (307 aa).

Positions 62–225 (IVAAFQKGGR…TTASMIRIGK (164 aa)) constitute an SIS domain. Residue Glu-90 is the Proton donor of the active site. Residue Glu-121 is part of the active site.

It belongs to the GCKR-like family. MurNAc-6-P etherase subfamily. In terms of assembly, homodimer.

It catalyses the reaction N-acetyl-D-muramate 6-phosphate + H2O = N-acetyl-D-glucosamine 6-phosphate + (R)-lactate. The protein operates within amino-sugar metabolism; 1,6-anhydro-N-acetylmuramate degradation. Its pathway is amino-sugar metabolism; N-acetylmuramate degradation. It functions in the pathway cell wall biogenesis; peptidoglycan recycling. Functionally, specifically catalyzes the cleavage of the D-lactyl ether substituent of MurNAc 6-phosphate, producing GlcNAc 6-phosphate and D-lactate. Together with AnmK, is also required for the utilization of anhydro-N-acetylmuramic acid (anhMurNAc) either imported from the medium or derived from its own cell wall murein, and thus plays a role in cell wall recycling. In Rhizobium rhizogenes (strain K84 / ATCC BAA-868) (Agrobacterium radiobacter), this protein is N-acetylmuramic acid 6-phosphate etherase.